We begin with the raw amino-acid sequence, 364 residues long: 3-isopropylmalate dehydrogenase (364 aa).

79 to 90 (GPKWGTGSVRPE) is an NAD(+) binding site. Substrate-binding residues include R97, R107, R136, and D225. D225, D250, and D254 together coordinate Mg(2+). An NAD(+)-binding site is contributed by 289-300 (GSAPDLPKNKVN).

Belongs to the isocitrate and isopropylmalate dehydrogenases family. As to quaternary structure, homodimer. Mg(2+) serves as cofactor. Requires Mn(2+) as cofactor.

It is found in the cytoplasm. The enzyme catalyses (2R,3S)-3-isopropylmalate + NAD(+) = 4-methyl-2-oxopentanoate + CO2 + NADH. Its pathway is amino-acid biosynthesis; L-leucine biosynthesis; L-leucine from 3-methyl-2-oxobutanoate: step 3/4. In terms of biological role, catalyzes the oxidation of 3-carboxy-2-hydroxy-4-methylpentanoate (3-isopropylmalate) to 3-carboxy-4-methyl-2-oxopentanoate. The product decarboxylates to 4-methyl-2 oxopentanoate. The protein is 3-isopropylmalate dehydrogenase (LEU2) of Saccharomyces cerevisiae (strain ATCC 204508 / S288c) (Baker's yeast).